The sequence spans 381 residues: rRNA adenine N-6-methyltransferase (381 aa).

A compositionally biased stretch (basic and acidic residues) spans 1–19; sequence MSSSDEQPRPRRRNQDRQH. Positions 1-42 are disordered; the sequence is MSSSDEQPRPRRRNQDRQHPNQNRPVLGRTERDRNRRQFGQN. 6 residues coordinate S-adenosyl-L-methionine: Asn-42, Leu-44, Gly-69, Glu-90, Asp-115, and Ala-131. The interval 282 to 381 is disordered; the sequence is RLDQKNEPRG…PGRRGGPGQR (100 aa). Basic and acidic residues predominate over residues 301-358; it reads GGRDHGDRRTGGQDRGDRRTGGRDHRDRQASGHGDRRSSGRNRDDGRTGEREQGDQGG. Gly residues predominate over residues 359–381; sequence RRGPSGGGRTGGRPGRRGGPGQR.

The protein belongs to the class I-like SAM-binding methyltransferase superfamily. rRNA adenine N(6)-methyltransferase family.

It catalyses the reaction adenosine(2085) in 23S rRNA + 2 S-adenosyl-L-methionine = N(6)-dimethyladenosine(2085) in 23S rRNA + 2 S-adenosyl-L-homocysteine + 2 H(+). In terms of biological role, this protein produces a dimethylation of the adenine residue at position 2085 in 23S rRNA, resulting in reduced affinity between ribosomes and macrolide-lincosamide-streptogramin B antibiotics. This is rRNA adenine N-6-methyltransferase (ermE) from Saccharopolyspora erythraea (strain ATCC 11635 / DSM 40517 / JCM 4748 / NBRC 13426 / NCIMB 8594 / NRRL 2338).